We begin with the raw amino-acid sequence, 411 residues long: Elongation factor 1-gamma (411 aa).

The region spanning 3–84 (LTLWSGVNPE…HIARLDRSGG (82 aa)) is the GST N-terminal domain. The 127-residue stretch at 90 to 216 (TPLEGSQVDM…QGATFGAREG (127 aa)) folds into the GST C-terminal domain. The disordered stretch occupies residues 212–265 (GAREGGAKGQGRGCARPGREEAERAAAAADGAEEEDEAPREKKKPNPLDELPPS). Over residues 214–223 (REGGAKGQGR) the composition is skewed to gly residues. The EF-1-gamma C-terminal domain occupies 255 to 411 (KPNPLDELPP…RPVLEGRVFK (157 aa)).

EF-1 is composed of four subunits: alpha, beta, delta, and gamma.

Functionally, probably plays a role in anchoring the complex to other cellular components. The chain is Elongation factor 1-gamma from Trypanosoma cruzi.